Here is a 136-residue protein sequence, read N- to C-terminus: Large ribosomal subunit protein uL16 (136 aa).

The protein belongs to the universal ribosomal protein uL16 family. In terms of assembly, part of the 50S ribosomal subunit.

In terms of biological role, binds 23S rRNA and is also seen to make contacts with the A and possibly P site tRNAs. The protein is Large ribosomal subunit protein uL16 of Mesomycoplasma hyopneumoniae (strain 232) (Mycoplasma hyopneumoniae).